We begin with the raw amino-acid sequence, 298 residues long: Proton-activated chloride channel (298 aa).

Residues 1-12 are Cytoplasmic-facing; it reads MPIGFNKACLKN. A helical transmembrane segment spans residues 13 to 33; sequence VFTVILVLIYLALTAVAVFLA. Residues 34 to 245 lie on the Extracellular side of the membrane; it reads YQTISDFMDK…RDPFIQQVKD (212 aa). The helical transmembrane segment at 246–266 threads the bilayer; the sequence is IVTANPWNTIAILCGVFMALF. At 267 to 298 the chain is on the cytoplasmic side; sequence KAADFAKLSIKWMIRIRKRHIRAKMREMNQIS.

The protein belongs to the proton-activated chloride channel family.

Its subcellular location is the cell membrane. The catalysed reaction is chloride(in) = chloride(out). Its function is as follows. Chloride channel gated by pH that facilitates the entry of chloride ions into cells upon exposure to extracellular acidic pH. Displays channel activity with distinct kinetic properties compared to the human ortholog channel. This chain is Proton-activated chloride channel, found in Danio rerio (Zebrafish).